The primary structure comprises 63 residues: Large ribosomal subunit protein bL35 (63 aa).

A disordered region spans residues 24–44 (RAKAYRSHRATGKTTKQKRQL).

Belongs to the bacterial ribosomal protein bL35 family.

This is Large ribosomal subunit protein bL35 from Mycoplasma mycoides subsp. mycoides SC (strain CCUG 32753 / NCTC 10114 / PG1).